A 409-amino-acid polypeptide reads, in one-letter code: Endoglucanase B (409 aa).

Residues histidine 61, 65–66 (WY), tyrosine 92, and histidine 127 contribute to the substrate site. Glutamate 165 (proton donor) is an active-site residue. Tyrosine 228 is a binding site for substrate. Glutamate 254 serves as the catalytic Nucleophile. Substrate-binding positions include 260 to 261 (AT), tryptophan 288, and 293 to 295 (KDE). A disordered region spans residues 326–372 (IRESATTPPSDPTPPSDPDPGEPEPDPGEPDPTPPSDPGDYPAWDPN). A compositionally biased stretch (pro residues) spans 334–343 (PSDPTPPSDP). Residues 344–354 (DPGEPEPDPGE) are compositionally biased toward acidic residues.

The protein belongs to the glycosyl hydrolase 5 (cellulase A) family.

The catalysed reaction is Endohydrolysis of (1-&gt;4)-beta-D-glucosidic linkages in cellulose, lichenin and cereal beta-D-glucans.. The protein is Endoglucanase B (celB) of Evansella cellulosilytica (strain ATCC 21833 / DSM 2522 / FERM P-1141 / JCM 9156 / N-4) (Bacillus cellulosilyticus).